A 418-amino-acid chain; its full sequence is E3 ubiquitin-protein ligase pellino homolog 1 (418 aa).

An FHA; atypical domain is found at 13–200 (APVKYGELIV…MHPRNGFTED (188 aa)). A Phosphoserine; by ATM modification is found at Ser-121. Thr-127 is subject to Phosphothreonine; by ATM. Residues 311–399 (CGHVHGYHNW…TFHAACPFCA (89 aa)) are ring-like domain; necessary for ubiqitination of RIPK3.

Belongs to the pellino family. In terms of assembly, interacts with MAP3K7. Upon IL1B treatment, forms a complex with TRAF6, IRAK1, IRAK4 and MYD88; this complex recruits MAP3K7/TAK1, TAB1 and TAB2 to mediate NF-kappa-B activation. Direct binding of SMAD6 to PELI1 prevents the complex formation and hence negatively regulates IL1R-TLR signaling and eventually NF-kappa-B-mediated gene expression. Interacts (via atypical FHA domain) with RIPK3; preferentially binds to the 'Thr-182' phosphorylated form of RIPK3. Interacts with RIPK1 and IRAK1. Post-translationally, phosphorylation by IRAK1 and IRAK4 enhances its E3 ligase activity. Phosphorylated by ATM in response to DNA damage, promoting localization to DNA double-strand breaks (DSBs) and ability to mediate 'Lys-63'-linked ubiquitination of NBN. Sumoylated. Expressed at high levels in normal skin but decreased in keratinocytes from toxic epidermal necrolysis (TEN) patients (at protein level).

It is found in the chromosome. It catalyses the reaction S-ubiquitinyl-[E2 ubiquitin-conjugating enzyme]-L-cysteine + [acceptor protein]-L-lysine = [E2 ubiquitin-conjugating enzyme]-L-cysteine + N(6)-ubiquitinyl-[acceptor protein]-L-lysine.. Its pathway is protein modification; protein ubiquitination. E3 ubiquitin ligase catalyzing the covalent attachment of ubiquitin moieties onto substrate proteins. Involved in the TLR and IL-1 signaling pathways via interaction with the complex containing IRAK kinases and TRAF6. Acts as a positive regulator of inflammatory response in microglia through activation of NF-kappa-B and MAP kinase. Mediates 'Lys-63'-linked polyubiquitination of IRAK1 allowing subsequent NF-kappa-B activation. Conjugates 'Lys-63'-linked ubiquitin chains to the adapter protein ASC/PYCARD, which in turn is crucial for NLRP3 inflammasome activation. Mediates 'Lys-48'-linked polyubiquitination of RIPK3 leading to its subsequent proteasome-dependent degradation; preferentially recognizes and mediates the degradation of the 'Thr-182' phosphorylated form of RIPK3. Negatively regulates necroptosis by reducing RIPK3 expression. Mediates 'Lys-63'-linked ubiquitination of RIPK1. Following phosphorylation by ATM, catalyzes 'Lys-63'-linked ubiquitination of NBN, promoting DNA repair via homologous recombination. Negatively regulates activation of the metabolic mTORC1 signaling pathway by mediating 'Lys-63'-linked ubiquitination of mTORC1-inhibitory protein TSC1 and thereby promoting TSC1/TSC2 complex stability. The protein is E3 ubiquitin-protein ligase pellino homolog 1 of Homo sapiens (Human).